The primary structure comprises 142 residues: DNA-directed RNA polymerase subunit omega (142 aa).

The segment at 93-142 is disordered; the sequence is AWSVPEAGGDEGGDASELLDDEGEGAAAGAEPDFSEMDVPLADLADEDKI. The segment covering 100-116 has biased composition (acidic residues); that stretch reads GGDEGGDASELLDDEGE.

Belongs to the RNA polymerase subunit omega family. In terms of assembly, the RNAP catalytic core consists of 2 alpha, 1 beta, 1 beta' and 1 omega subunit. When a sigma factor is associated with the core the holoenzyme is formed, which can initiate transcription.

It carries out the reaction RNA(n) + a ribonucleoside 5'-triphosphate = RNA(n+1) + diphosphate. Its function is as follows. Promotes RNA polymerase assembly. Latches the N- and C-terminal regions of the beta' subunit thereby facilitating its interaction with the beta and alpha subunits. The protein is DNA-directed RNA polymerase subunit omega of Rhodospirillum centenum (strain ATCC 51521 / SW).